Here is a 199-residue protein sequence, read N- to C-terminus: Melanocortin-2 receptor accessory protein 2B (199 aa).

Asn6 carries an N-linked (GlcNAc...) asparagine glycan. A helical transmembrane segment spans residues 39-59; sequence IVIGFWVGLAVFVIFMFFVLT.

This sequence belongs to the MRAP family. As to quaternary structure, interacts with mc4r. As to expression, expressed in adult brain.

It is found in the cell membrane. It localises to the endoplasmic reticulum membrane. Functionally, activator of melanocortin receptor 4 (mc4r), a receptor involved in energy homeostasis. Plays a role after larval development in the control of energy homeostasis and body weight regulation by increasing ligand-sensitivity of mc4r and mc4r-mediated generation of cAMP once the zebrafish begins feeding, increasing the capacity for regulated feeding and growth. The protein is Melanocortin-2 receptor accessory protein 2B (mrap2b) of Danio rerio (Zebrafish).